The primary structure comprises 516 residues: Chromosomal replication initiator protein DnaA (516 aa).

The domain I, interacts with DnaA modulators stretch occupies residues 1–72; it reads MSLEHWNLCL…LLSEFAGDDL (72 aa). Positions 72-179 are domain II; the sequence is LAPALKLAVK…QVEGGINHGA (108 aa). A domain III, AAA+ region region spans residues 180-396; that stretch reads NLNNSFTFDN…GALKRVIANS (217 aa). ATP is bound by residues Gly224, Gly226, Lys227, and Thr228. The interval 397–516 is domain IV, binds dsDNA; the sequence is HFTGRAITPD…YKQLMRILTT (120 aa).

Belongs to the DnaA family. Oligomerizes as a right-handed, spiral filament on DNA at oriC.

It is found in the cytoplasm. Its function is as follows. Plays an essential role in the initiation and regulation of chromosomal replication. ATP-DnaA binds to the origin of replication (oriC) to initiate formation of the DNA replication initiation complex once per cell cycle. Binds the DnaA box (a 9 base pair repeat at the origin) and separates the double-stranded (ds)DNA. Forms a right-handed helical filament on oriC DNA; dsDNA binds to the exterior of the filament while single-stranded (ss)DNA is stabiized in the filament's interior. The ATP-DnaA-oriC complex binds and stabilizes one strand of the AT-rich DNA unwinding element (DUE), permitting loading of DNA polymerase. After initiation quickly degrades to an ADP-DnaA complex that is not apt for DNA replication. Binds acidic phospholipids. This chain is Chromosomal replication initiator protein DnaA, found in Marinomonas sp. (strain MWYL1).